A 185-amino-acid chain; its full sequence is Elongation factor P (185 aa).

The protein belongs to the elongation factor P family.

It localises to the cytoplasm. Its pathway is protein biosynthesis; polypeptide chain elongation. In terms of biological role, involved in peptide bond synthesis. Stimulates efficient translation and peptide-bond synthesis on native or reconstituted 70S ribosomes in vitro. Probably functions indirectly by altering the affinity of the ribosome for aminoacyl-tRNA, thus increasing their reactivity as acceptors for peptidyl transferase. The protein is Elongation factor P of Salinispora arenicola (strain CNS-205).